The chain runs to 263 residues: 4-hydroxy-tetrahydrodipicolinate reductase (263 aa).

Residue 10–15 (GASGKM) coordinates NAD(+). An NADP(+)-binding site is contributed by R38. Residues 97–99 (GTT) and 123–126 (APNF) each bind NAD(+). Residue H153 is the Proton donor/acceptor of the active site. (S)-2,3,4,5-tetrahydrodipicolinate is bound at residue H154. K157 serves as the catalytic Proton donor. 163-164 (GT) contributes to the (S)-2,3,4,5-tetrahydrodipicolinate binding site.

Belongs to the DapB family.

Its subcellular location is the cytoplasm. The enzyme catalyses (S)-2,3,4,5-tetrahydrodipicolinate + NAD(+) + H2O = (2S,4S)-4-hydroxy-2,3,4,5-tetrahydrodipicolinate + NADH + H(+). The catalysed reaction is (S)-2,3,4,5-tetrahydrodipicolinate + NADP(+) + H2O = (2S,4S)-4-hydroxy-2,3,4,5-tetrahydrodipicolinate + NADPH + H(+). The protein operates within amino-acid biosynthesis; L-lysine biosynthesis via DAP pathway; (S)-tetrahydrodipicolinate from L-aspartate: step 4/4. Catalyzes the conversion of 4-hydroxy-tetrahydrodipicolinate (HTPA) to tetrahydrodipicolinate. The sequence is that of 4-hydroxy-tetrahydrodipicolinate reductase from Dehalococcoides mccartyi (strain ATCC BAA-2266 / KCTC 15142 / 195) (Dehalococcoides ethenogenes (strain 195)).